The primary structure comprises 593 residues: Meiotic recombination protein REC8 homolog (593 aa).

S149 carries the phosphoserine modification. T164 is subject to Phosphothreonine. A Phosphoserine modification is found at S192. Disordered stretches follow at residues 247-282 (QRRA…AQVE), 317-344 (ELRL…RRGR), and 422-444 (PQLE…RRKT). Basic and acidic residues predominate over residues 255–265 (DESKEEPRALE). The span at 432 to 444 (EERVADKEERRKT) shows a compositional bias: basic and acidic residues.

The protein belongs to the rad21 family. Interacts (phosphorylated and unphosphorylated form) with SMC3. Interacts with SYCP3. Interacts (phosphorylated and unphosphorylated form) with SMC1B. Does not interact with SMC1A. Interacts with RAD51. Forms a complex with EWSR1, PRDM9, SYCP3 and SYCP1; complex formation is dependent of phosphorylated form of REC8 and requires PRDM9 bound to hotspot DNA; EWSR1 joins PRDM9 with the chromosomal axis through REC8. In terms of processing, phosphorylated.

It is found in the nucleus. The protein localises to the chromosome. The protein resides in the centromere. Its function is as follows. Required during meiosis for separation of sister chromatids and homologous chromosomes. Proteolytic cleavage of REC8 on chromosome arms by separin during anaphase I allows for homologous chromosome separation in meiosis I and cleavage of REC8 on centromeres during anaphase II allows for sister chromatid separation in meiosis II. The chain is Meiotic recombination protein REC8 homolog from Rattus norvegicus (Rat).